Consider the following 473-residue polypeptide: Kremen protein 1 (473 aa).

Residues 1–19 form the signal peptide; sequence MAPPAARLALLSAAALTLA. Residues 21–392 lie on the Extracellular side of the membrane; it reads RPAPGPRPSP…ASGHRVEGWT (372 aa). The Kringle domain occupies 31 to 114; that stretch reads ECFTANGADY…YWKYCEIPAC (84 aa). 8 disulfide bridges follow: C32/C114, C55/C95, C84/C109, C122/C186, C147/C167, C151/C169, C190/C198, and C214/C240. N59 carries N-linked (GlcNAc...) asparagine glycosylation. Positions 116-210 constitute a WSC domain; sequence MPGNLGCYKD…DGRIILFDTL (95 aa). Positions 214–321 constitute a CUB domain; the sequence is CGGNYSSMAA…QGFAVLYQAT (108 aa). N217, N255, N293, N333, and N345 each carry an N-linked (GlcNAc...) asparagine glycan. The helical transmembrane segment at 393–413 threads the bilayer; the sequence is VYGLATLLILTVTAVVAKILL. Over 414 to 473 the chain is Cytoplasmic; the sequence is HVTFKSHRVTASGDLRDCRQPGTSGEIWTIFYEPSTTISIFKKKLKGQSQQDDRNPLVSD. Residues 414–473 form an essential for apoptotic activity region; the sequence is HVTFKSHRVTASGDLRDCRQPGTSGEIWTIFYEPSTTISIFKKKLKGQSQQDDRNPLVSD.

As to quaternary structure, forms a ternary complex with DKK1 and LRP6. Interacts with LRP6 in a DKK1-dependent manner. Interacts with DKK1 and RSPO1 (via FU repeats).

The protein localises to the cell membrane. Functionally, receptor for Dickkopf proteins. Cooperates with DKK1/2 to inhibit Wnt/beta-catenin signaling by promoting the endocytosis of Wnt receptors LRP5 and LRP6. In the absence of DKK1, potentiates Wnt-beta-catenin signaling by maintaining LRP5 or LRP6 at the cell membrane. Can trigger apoptosis in a Wnt-independent manner and this apoptotic activity is inhibited upon binding of the ligand DKK1. Plays a role in limb development; attenuates Wnt signaling in the developing limb to allow normal limb patterning and can also negatively regulate bone formation. Modulates cell fate decisions in the developing cochlea with an inhibitory role in hair cell fate specification. The protein is Kremen protein 1 (Kremen1) of Rattus norvegicus (Rat).